Reading from the N-terminus, the 122-residue chain is Cytochrome c-556 (122 aa).

Methionine 11, cysteine 111, cysteine 114, and histidine 115 together coordinate heme. The heme c site is built by methionine 11, cysteine 111, cysteine 114, and histidine 115.

Monomer. Post-translationally, binds 1 heme c group covalently per subunit.

Low-spin monoheme cytochrome c. The polypeptide is Cytochrome c-556 (Agrobacterium tumefaciens (strain II Chrys)).